Consider the following 230-residue polypeptide: DNA mismatch repair protein MutH (230 aa).

This sequence belongs to the MutH family.

The protein localises to the cytoplasm. Functionally, sequence-specific endonuclease that cleaves unmethylated GATC sequences. It is involved in DNA mismatch repair. This is DNA mismatch repair protein MutH from Enterobacter sp. (strain 638).